Here is a 346-residue protein sequence, read N- to C-terminus: Putative cytochrome bd menaquinol oxidase subunit II (346 aa).

Transmembrane regions (helical) follow at residues Ala-7–Met-27, Val-63–Leu-83, Leu-87–Phe-107, Tyr-119–Thr-139, Ala-164–Ala-184, Lys-201–Met-221, Phe-236–Pro-256, Leu-269–His-289, and Ala-312–Trp-332.

This sequence belongs to the cytochrome ubiquinol oxidase subunit 2 family.

It is found in the cell membrane. In terms of biological role, may have a role in sporulation. Can compensate for the loss of cytochrome aa3. The protein is Putative cytochrome bd menaquinol oxidase subunit II (ythB) of Bacillus subtilis (strain 168).